The chain runs to 83 residues: U20-theraphotoxin-Cg1a 2 (83 aa).

Positions 1–21 (MQVSVLITLAVLGVMFVWTSA) are cleaved as a signal peptide. Positions 22–47 (AELEERGSDQPAWLKSLERIFQSEER) are excised as a propeptide. 3 disulfides stabilise this stretch: C49–C63, C56–C68, and C62–C76.

It belongs to the neurotoxin 10 (Hwtx-1) family. 40 (Jztx-35) subfamily. Expressed by the venom gland.

The protein resides in the secreted. Its function is as follows. Probable ion channel inhibitor. The sequence is that of U20-theraphotoxin-Cg1a 2 from Chilobrachys guangxiensis (Chinese earth tiger tarantula).